The primary structure comprises 273 residues: Octanoyl-[GcvH]:protein N-octanoyltransferase (273 aa).

Residues 40–245 (ATEGAAIRSW…SLMELGATLT (206 aa)) enclose the BPL/LPL catalytic domain. Residue Cys144 is the Acyl-thioester intermediate of the active site.

This sequence belongs to the octanoyltransferase LipL family.

The enzyme catalyses N(6)-octanoyl-L-lysyl-[glycine-cleavage complex H protein] + L-lysyl-[lipoyl-carrier protein] = N(6)-octanoyl-L-lysyl-[lipoyl-carrier protein] + L-lysyl-[glycine-cleavage complex H protein]. Its pathway is protein modification; protein lipoylation via endogenous pathway; protein N(6)-(lipoyl)lysine from octanoyl-[acyl-carrier-protein]. In terms of biological role, catalyzes the amidotransfer (transamidation) of the octanoyl moiety from octanoyl-GcvH to the lipoyl domain of the E2 subunit of lipoate-dependent enzymes. This chain is Octanoyl-[GcvH]:protein N-octanoyltransferase, found in Exiguobacterium sibiricum (strain DSM 17290 / CCUG 55495 / CIP 109462 / JCM 13490 / 255-15).